A 343-amino-acid polypeptide reads, in one-letter code: Protein RecA (343 aa).

64–71 contributes to the ATP binding site; the sequence is GPESSGKT.

The protein belongs to the RecA family.

It localises to the cytoplasm. Functionally, can catalyze the hydrolysis of ATP in the presence of single-stranded DNA, the ATP-dependent uptake of single-stranded DNA by duplex DNA, and the ATP-dependent hybridization of homologous single-stranded DNAs. It interacts with LexA causing its activation and leading to its autocatalytic cleavage. The chain is Protein RecA from Acidiphilium cryptum (strain JF-5).